The primary structure comprises 648 residues: Cell surface glycoprotein MUC18 (648 aa).

Positions 1–23 (MGLPRLVCAFLFAACCCCRSATG) are cleaved as a signal peptide. 2 consecutive Ig-like V-type domains span residues 24-131 (VPGE…HYVQ) and 141-244 (PTIQ…KEVT). Residues 24–560 (VPGEEKQPTP…EKKLPQQESK (537 aa)) lie on the Extracellular side of the membrane. Intrachain disulfides connect C50-C118, C163-C225, C274-C322, C367-C409, and C454-C501. A glycan (N-linked (GlcNAc...) asparagine) is linked at N58. Ig-like C2-type domains follow at residues 246–332 (PVLY…TTVM), 337–426 (PLEL…RRVS), and 432–512 (SPWM…SNTT). The interval 282–304 (PHFTINKKNPSTEEMEEESTDEN) is disordered. N510 is a glycosylation site (N-linked (GlcNAc...) asparagine). A compositionally biased stretch (polar residues) spans 527–549 (DSSQTTGLSTPTVSPHSRANSTS). Residues 527–554 (DSSQTTGLSTPTVSPHSRANSTSTEKKL) are disordered. The helical transmembrane segment at 561 to 581 (GVVIVAVIVCTLVLAVLGATL) threads the bilayer. Residues 582–648 (YYFYKKGKLP…QGEKYIDLRH (67 aa)) lie on the Cytoplasmic side of the membrane. 2 positions are modified to phosphoserine: S608 and S616. Positions 626–648 (LQGSNGDKRAPGDQGEKYIDLRH) are disordered. The segment covering 631 to 648 (GDKRAPGDQGEKYIDLRH) has biased composition (basic and acidic residues).

As to expression, detected in lung, uterus and placenta (at protein level). Detected in heart, lung, kidney, adrenal gland, intestine, testis, skeletal muscle and aorta. Detected at low levels in adult brain, in particular in brain stem and spinal cord, but also in hippocampus, olfactory bulb and striatum (at protein level).

It is found in the cell membrane. It localises to the perikaryon. Plays a role in cell adhesion, and in cohesion of the endothelial monolayer at intercellular junctions in vascular tissue. Its expression may allow melanoma cells to interact with cellular elements of the vascular system, thereby enhancing hematogeneous tumor spread. Could be an adhesion molecule active in neural crest cells during embryonic development. Acts as a surface receptor that triggers tyrosine phosphorylation of FYN and PTK2/FAK1, and a transient increase in the intracellular calcium concentration. In Rattus norvegicus (Rat), this protein is Cell surface glycoprotein MUC18 (Mcam).